The following is a 1159-amino-acid chain: Ferroxidase HEPHL1 (1159 aa).

Positions 1-23 (MFLKQPGGCILLQFLGLLGLVGA) are cleaved as a signal peptide. Plastocyanin-like domains are found at residues 24-206 (VTRT…LLVC), 217-365 (MRTD…VGNC), 378-560 (QRRY…LLVC), 570-718 (TQKG…ISSC), 730-906 (MLRT…LITC), and 914-1092 (KGRR…VPSQ). The Extracellular portion of the chain corresponds to 24 to 1114 (VTRTYYIGIV…KNLRPRGAKA (1091 aa)). The Cu cation site is built by His126 and His128. N-linked (GlcNAc...) asparagine glycosylation occurs at Asn160. An intrachain disulfide couples Cys180 to Cys206. Cu cation contacts are provided by His186 and His188. The N-linked (GlcNAc...) asparagine glycan is linked to Asn235. Cys284 and Cys365 are disulfide-bonded. Cu cation is bound by residues His303, Cys346, and His351. Asn406 is a glycosylation site (N-linked (GlcNAc...) asparagine). A disulfide bridge links Cys534 with Cys560. Asn588 carries an N-linked (GlcNAc...) asparagine glycan. Cysteines 637 and 718 form a disulfide. Residues His656, Cys699, His704, and Met709 each coordinate Cu cation. An N-linked (GlcNAc...) asparagine glycan is attached at Asn771. A disulfide bridge links Cys880 with Cys906. N-linked (GlcNAc...) asparagine glycosylation occurs at Asn934. Positions 1002, 1005, 1007, 1047, 1048, 1049, 1053, and 1058 each coordinate Cu cation. The helical transmembrane segment at 1115–1135 (ALVILFILGLLLLVATVVLAL) threads the bilayer. The Cytoplasmic segment spans residues 1136–1159 (RLRSSRRQMAYREVQSCALPTDAL).

This sequence belongs to the multicopper oxidase family. It depends on Cu cation as a cofactor.

It is found in the membrane. It carries out the reaction 4 Fe(2+) + O2 + 4 H(+) = 4 Fe(3+) + 2 H2O. Its function is as follows. Is a copper-binding glycoprotein with ferroxidase activity. It oxidizes Fe(2+) to Fe(3+) without releasing radical oxygen species. May be involved in the regulation of intracellular iron content. The protein is Ferroxidase HEPHL1 (Hephl1) of Mus musculus (Mouse).